We begin with the raw amino-acid sequence, 43 residues long: Protein PsbN 2 (43 aa).

Residues 4 to 24 (ATILGISIAAALVGITVLALY) form a helical membrane-spanning segment.

This sequence belongs to the PsbN family.

The protein localises to the cellular thylakoid membrane. In terms of biological role, may play a role in photosystem I and II biogenesis. The sequence is that of Protein PsbN 2 from Microcystis aeruginosa (strain NIES-843 / IAM M-2473).